Reading from the N-terminus, the 130-residue chain is uncharacterized protein (130 aa).

Residues 1–28 (MELAKERNGPHQKHHGQCQNHCTSPNTV) form a disordered region. Residues 17 to 28 (QCQNHCTSPNTV) are compositionally biased toward polar residues.

This is an uncharacterized protein from Saccharomyces cerevisiae (strain ATCC 204508 / S288c) (Baker's yeast).